The primary structure comprises 251 residues: Triosephosphate isomerase (251 aa).

Substrate is bound at residue 9 to 11 (NWK). The active-site Electrophile is the His95. Glu167 acts as the Proton acceptor in catalysis. Residues Gly173, Ser213, and 234-235 (GG) contribute to the substrate site.

It belongs to the triosephosphate isomerase family. Homodimer.

Its subcellular location is the cytoplasm. The catalysed reaction is D-glyceraldehyde 3-phosphate = dihydroxyacetone phosphate. Its pathway is carbohydrate biosynthesis; gluconeogenesis. It participates in carbohydrate degradation; glycolysis; D-glyceraldehyde 3-phosphate from glycerone phosphate: step 1/1. In terms of biological role, involved in the gluconeogenesis. Catalyzes stereospecifically the conversion of dihydroxyacetone phosphate (DHAP) to D-glyceraldehyde-3-phosphate (G3P). The chain is Triosephosphate isomerase from Lacticaseibacillus casei (strain BL23) (Lactobacillus casei).